A 120-amino-acid polypeptide reads, in one-letter code: Large ribosomal subunit protein bL17 (120 aa).

This sequence belongs to the bacterial ribosomal protein bL17 family. In terms of assembly, part of the 50S ribosomal subunit. Contacts protein L32.

This chain is Large ribosomal subunit protein bL17, found in Mycoplasmopsis synoviae (strain 53) (Mycoplasma synoviae).